A 368-amino-acid polypeptide reads, in one-letter code: Probable magnesium transporter NIPA3 (368 aa).

At 1–18 (MASLSGSWRDAYKGMSSD) the chain is on the extracellular side. Residues 19–39 (NIKGLVLALSSSLFIGASFIV) traverse the membrane as a helical segment. Residues 40–66 (KKKGLKRAGASGLRAGSGGYSYLLEPL) lie on the Cytoplasmic side of the membrane. A helical transmembrane segment spans residues 67–87 (WWVGMITMIVGEIANFAAYAF). The Extracellular portion of the chain corresponds to 88–90 (APA). A helical membrane pass occupies residues 91–111 (ILVTPLGALSIIISAALAHVI). Residues 112-115 (LHEK) are Cytoplasmic-facing. Residues 116 to 136 (LHTFGLLGCVLCVVGSITIVL) traverse the membrane as a helical segment. Topologically, residues 137-157 (HAPQEQEIDSVLQVWNLATEP) are extracellular. A helical membrane pass occupies residues 158–178 (AFLLYAAAVVGAAIILIVQFV). The Cytoplasmic portion of the chain corresponds to 179–189 (PQYGQSHVMVY). The chain crosses the membrane as a helical span at residues 190 to 210 (IGVCSLVGSLSVMSVKALGIA). Residues 211–220 (LKLTFSGMNQ) are Extracellular-facing. A helical transmembrane segment spans residues 221–241 (LIYPQTWVFTLIVLTCVITQM). At 242-255 (NYLNKALDTFNTAV) the chain is on the cytoplasmic side. Residues 256–276 (VSPIYYVMFTSLTILASVIMF) traverse the membrane as a helical segment. The Extracellular segment spans residues 277–283 (KDWDRQD). Residues 284-304 (GTQIVTELCGFVTILSGTFLL) traverse the membrane as a helical segment. Residues 305–368 (HKTKDMVDGS…ILPQDGPEAV (64 aa)) are Cytoplasmic-facing.

It belongs to the NIPA (TC 2.A.7) family. In terms of assembly, homodimer.

It is found in the cell membrane. It localises to the early endosome. Functionally, acts as a Mg(2+) transporter. Can also transport other divalent cations such as Fe(2+), Sr(2+), Ba(2+), Mn(2+) and Co(2+) but to a much less extent than Mg(2+). The chain is Probable magnesium transporter NIPA3 from Arabidopsis thaliana (Mouse-ear cress).